A 511-amino-acid chain; its full sequence is Glutamyl-tRNA(Gln) amidotransferase subunit A, mitochondrial (511 aa).

Active-site charge relay system residues include lysine 72 and serine 149. Catalysis depends on serine 173, which acts as the Acyl-ester intermediate.

This sequence belongs to the amidase family. GatA subfamily. Subunit of the heterotrimeric GatCAB amidotransferase (AdT) complex, composed of A, B and C subunits.

The protein localises to the mitochondrion. The catalysed reaction is L-glutamyl-tRNA(Gln) + L-glutamine + ATP + H2O = L-glutaminyl-tRNA(Gln) + L-glutamate + ADP + phosphate + H(+). Allows the formation of correctly charged Gln-tRNA(Gln) through the transamidation of misacylated Glu-tRNA(Gln) in the mitochondria. The reaction takes place in the presence of glutamine and ATP through an activated gamma-phospho-Glu-tRNA(Gln). In Fusarium vanettenii (strain ATCC MYA-4622 / CBS 123669 / FGSC 9596 / NRRL 45880 / 77-13-4) (Fusarium solani subsp. pisi), this protein is Glutamyl-tRNA(Gln) amidotransferase subunit A, mitochondrial.